The following is a 402-amino-acid chain: Protein arginine methyltransferase NDUFAF7 homolog, mitochondrial (402 aa).

Belongs to the NDUFAF7 family.

It is found in the mitochondrion. It catalyses the reaction L-arginyl-[protein] + 2 S-adenosyl-L-methionine = N(omega),N(omega)'-dimethyl-L-arginyl-[protein] + 2 S-adenosyl-L-homocysteine + 2 H(+). Arginine methyltransferase involved in the assembly or stability of mitochondrial NADH:ubiquinone oxidoreductase complex (complex I). This Saccharomyces cerevisiae (strain ATCC 204508 / S288c) (Baker's yeast) protein is Protein arginine methyltransferase NDUFAF7 homolog, mitochondrial.